The sequence spans 110 residues: MAKPANKLVIVTEKILLKKIAKIIDESGAKGYTVMNTGGKGSRNVRSSGQPNTSDIEANIKFEILTETREMAEEIADRVAVKYFNDYAGIIYICSAEVLYGHTFCGPEGC.

The protein resides in the cellular thylakoid membrane. It localises to the cell membrane. In Synechocystis sp. (strain ATCC 27184 / PCC 6803 / Kazusa), this protein is Membrane-associated protein slr1513.